Consider the following 145-residue polypeptide: MILMVIVFLLLLFWENELTEDVVLTSMEHLHVDYPQSAVPLRYCNYMILQRVIREPDYTCRKVHVFIHERPQKINRICTSSKKMTCPNYSEIFCFQSDTKFRMTVCQLTGGSKYPACRYQISPTEGFVLVTCDDLGPVNFQGYVE.

Positions 1–19 (MILMVIVFLLLLFWENELT) are cleaved as a signal peptide. Asn88 carries an N-linked (GlcNAc...) asparagine glycan.

The protein belongs to the pancreatic ribonuclease family.

Its subcellular location is the secreted. Does not exhibit any ribonuclease activity. This is Probable inactive ribonuclease-like protein 12 (Rnase12) from Rattus norvegicus (Rat).